The primary structure comprises 257 residues: Cytochrome c oxidase subunit 3 (257 aa).

6 consecutive transmembrane segments (helical) span residues 13-33 (PWPI…VSYF), 36-56 (LSMY…FQWW), 80-100 (GMIL…WAFF), 154-174 (YISA…FTMF), 195-215 (FFMT…FLLV), and 237-257 (AWYW…MYWW).

Belongs to the cytochrome c oxidase subunit 3 family. As to quaternary structure, component of the cytochrome c oxidase (complex IV, CIV), a multisubunit enzyme composed of a catalytic core of 3 subunits and several supernumerary subunits. The complex exists as a monomer or a dimer and forms supercomplexes (SCs) in the inner mitochondrial membrane with ubiquinol-cytochrome c oxidoreductase (cytochrome b-c1 complex, complex III, CIII).

Its subcellular location is the mitochondrion inner membrane. It carries out the reaction 4 Fe(II)-[cytochrome c] + O2 + 8 H(+)(in) = 4 Fe(III)-[cytochrome c] + 2 H2O + 4 H(+)(out). Functionally, component of the cytochrome c oxidase, the last enzyme in the mitochondrial electron transport chain which drives oxidative phosphorylation. The respiratory chain contains 3 multisubunit complexes succinate dehydrogenase (complex II, CII), ubiquinol-cytochrome c oxidoreductase (cytochrome b-c1 complex, complex III, CIII) and cytochrome c oxidase (complex IV, CIV), that cooperate to transfer electrons derived from NADH and succinate to molecular oxygen, creating an electrochemical gradient over the inner membrane that drives transmembrane transport and the ATP synthase. Cytochrome c oxidase is the component of the respiratory chain that catalyzes the reduction of oxygen to water. Electrons originating from reduced cytochrome c in the intermembrane space (IMS) are transferred via the dinuclear copper A center (CU(A)) of subunit 2 and heme A of subunit 1 to the active site in subunit 1, a binuclear center (BNC) formed by heme A3 and copper B (CU(B)). The BNC reduces molecular oxygen to 2 water molecules using 4 electrons from cytochrome c in the IMS and 4 protons from the mitochondrial matrix. This is Cytochrome c oxidase subunit 3 (COIII) from Rhipicephalus sanguineus (Brown dog tick).